Consider the following 242-residue polypeptide: uncharacterized protein (242 aa).

The segment covering 1–12 (MKLRRERFERRN) has biased composition (basic and acidic residues). Residues 1–21 (MKLRRERFERRNGSGKNSQSS) are disordered. Residues 1–23 (MKLRRERFERRNGSGKNSQSSSS) lie on the Cytoplasmic side of the membrane. The helical transmembrane segment at 24 to 44 (WMVTFTDLITLILVFFILLFS) threads the bilayer. The Extracellular portion of the chain corresponds to 45–242 (MSQIDLQKFK…VIKKSKTTSS (198 aa)). Residues 64 to 91 (GNGLQPDQTSIEKKNTSPSDTKKQEDQQ) are disordered. Over residues 73 to 89 (SIEKKNTSPSDTKKQED) the composition is skewed to basic and acidic residues. Positions 117–238 (ERGVVLVLQE…RVEIVIKKSK (122 aa)) constitute an OmpA-like domain.

The protein belongs to the MotB family.

The protein localises to the cell membrane. In terms of biological role, may be involved in some transport function. This is an uncharacterized protein from Bacillus subtilis (strain 168).